We begin with the raw amino-acid sequence, 404 residues long: Druantia protein DruA (404 aa).

It localises to the cytoplasm. In terms of biological role, component of antiviral defense system Druantia type I, composed of DruA, DruB, DruC, DruD and DruE. Expression of Druantia in E.coli (strain MG1655) confers resistance to phage lambda, SECphi18, SECphi27 and T4. The chain is Druantia protein DruA from Escherichia coli (strain UMEA 4076-1).